The sequence spans 134 residues: Small ribosomal subunit protein uS11 (134 aa).

The protein belongs to the universal ribosomal protein uS11 family. Part of the 30S ribosomal subunit. Interacts with proteins S7 and S18. Binds to IF-3.

Functionally, located on the platform of the 30S subunit, it bridges several disparate RNA helices of the 16S rRNA. Forms part of the Shine-Dalgarno cleft in the 70S ribosome. In Frankia alni (strain DSM 45986 / CECT 9034 / ACN14a), this protein is Small ribosomal subunit protein uS11.